A 218-amino-acid chain; its full sequence is Octanoyltransferase (218 aa).

In terms of domain architecture, BPL/LPL catalytic spans 31-207 (AQTPDELWLL…QLAAQLGYAE (177 aa)). Substrate-binding positions include 70 to 77 (RGGQVTYH), 137 to 139 (SLG), and 150 to 152 (GLA). The Acyl-thioester intermediate role is filled by C168.

This sequence belongs to the LipB family.

It is found in the cytoplasm. It catalyses the reaction octanoyl-[ACP] + L-lysyl-[protein] = N(6)-octanoyl-L-lysyl-[protein] + holo-[ACP] + H(+). The protein operates within protein modification; protein lipoylation via endogenous pathway; protein N(6)-(lipoyl)lysine from octanoyl-[acyl-carrier-protein]: step 1/2. Catalyzes the transfer of endogenously produced octanoic acid from octanoyl-acyl-carrier-protein onto the lipoyl domains of lipoate-dependent enzymes. Lipoyl-ACP can also act as a substrate although octanoyl-ACP is likely to be the physiological substrate. The sequence is that of Octanoyltransferase from Azotobacter vinelandii (strain DJ / ATCC BAA-1303).